Consider the following 219-residue polypeptide: Probable glutathione S-transferase MSR-1 (219 aa).

In terms of domain architecture, GST N-terminal spans 4 to 83 (NNVVLLDFSG…YIDEVWHEKC (80 aa)). Glutathione is bound by residues S14, K41, I55, and 67 to 68 (ES). The 120-residue stretch at 89–208 (DPYQRSQARF…LPHPHKIYDF (120 aa)) folds into the GST C-terminal domain.

The protein belongs to the GST superfamily. HSP26 family.

It carries out the reaction RX + glutathione = an S-substituted glutathione + a halide anion + H(+). May play an important role in hormonal and growth regulatory responses. This Nicotiana plumbaginifolia (Leadwort-leaved tobacco) protein is Probable glutathione S-transferase MSR-1 (MSR-1).